A 394-amino-acid chain; its full sequence is 1-deoxy-D-xylulose 5-phosphate reductoisomerase (394 aa).

The NADPH site is built by T10, G11, S12, I13, G38, R39, N40, and N123. K124 lines the 1-deoxy-D-xylulose 5-phosphate pocket. E125 contacts NADPH. D149 contributes to the Mn(2+) binding site. The 1-deoxy-D-xylulose 5-phosphate site is built by S150, E151, S175, and H198. E151 provides a ligand contact to Mn(2+). G204 is an NADPH binding site. 1-deoxy-D-xylulose 5-phosphate contacts are provided by S211, N216, K217, and E220. E220 contributes to the Mn(2+) binding site.

It belongs to the DXR family. The cofactor is Mg(2+). Mn(2+) serves as cofactor.

The catalysed reaction is 2-C-methyl-D-erythritol 4-phosphate + NADP(+) = 1-deoxy-D-xylulose 5-phosphate + NADPH + H(+). It participates in isoprenoid biosynthesis; isopentenyl diphosphate biosynthesis via DXP pathway; isopentenyl diphosphate from 1-deoxy-D-xylulose 5-phosphate: step 1/6. Its function is as follows. Catalyzes the NADPH-dependent rearrangement and reduction of 1-deoxy-D-xylulose-5-phosphate (DXP) to 2-C-methyl-D-erythritol 4-phosphate (MEP). The polypeptide is 1-deoxy-D-xylulose 5-phosphate reductoisomerase (Cereibacter sphaeroides (strain ATCC 17023 / DSM 158 / JCM 6121 / CCUG 31486 / LMG 2827 / NBRC 12203 / NCIMB 8253 / ATH 2.4.1.) (Rhodobacter sphaeroides)).